The chain runs to 72 residues: Translation initiation factor IF-1 (72 aa).

The S1-like domain occupies 1–72 (MAKDDVIEVE…NRGRITYRFK (72 aa)). Position 60 is a phosphotyrosine (tyrosine 60).

The protein belongs to the IF-1 family. As to quaternary structure, component of the 30S ribosomal translation pre-initiation complex which assembles on the 30S ribosome in the order IF-2 and IF-3, IF-1 and N-formylmethionyl-tRNA(fMet); mRNA recruitment can occur at any time during PIC assembly.

It localises to the cytoplasm. One of the essential components for the initiation of protein synthesis. Stabilizes the binding of IF-2 and IF-3 on the 30S subunit to which N-formylmethionyl-tRNA(fMet) subsequently binds. Helps modulate mRNA selection, yielding the 30S pre-initiation complex (PIC). Upon addition of the 50S ribosomal subunit IF-1, IF-2 and IF-3 are released leaving the mature 70S translation initiation complex. This is Translation initiation factor IF-1 from Bacillus thuringiensis (strain Al Hakam).